Here is a 335-residue protein sequence, read N- to C-terminus: DNA-directed RNA polymerase subunit alpha (335 aa).

The segment at 1-233 (MTRTANEFLT…QQIAIFVDLQ (233 aa)) is alpha N-terminal domain (alpha-NTD). Positions 247-335 (VDPILLRPVD…MDDRFAYRSR (89 aa)) are alpha C-terminal domain (alpha-CTD).

Belongs to the RNA polymerase alpha chain family. Homodimer. The RNAP catalytic core consists of 2 alpha, 1 beta, 1 beta' and 1 omega subunit. When a sigma factor is associated with the core the holoenzyme is formed, which can initiate transcription.

It carries out the reaction RNA(n) + a ribonucleoside 5'-triphosphate = RNA(n+1) + diphosphate. DNA-dependent RNA polymerase catalyzes the transcription of DNA into RNA using the four ribonucleoside triphosphates as substrates. The polypeptide is DNA-directed RNA polymerase subunit alpha (Acinetobacter baylyi (strain ATCC 33305 / BD413 / ADP1)).